Here is a 336-residue protein sequence, read N- to C-terminus: Biotin synthase (336 aa).

The 234-residue stretch at 55–288 (GEAASLHACS…RTIIKFAAGR (234 aa)) folds into the Radical SAM core domain. Cys73, Cys77, and Cys80 together coordinate [4Fe-4S] cluster. The [2Fe-2S] cluster site is built by Cys152, Cys213, and Lys283.

It belongs to the radical SAM superfamily. Biotin synthase family. As to quaternary structure, homodimer. The cofactor is [4Fe-4S] cluster. [2Fe-2S] cluster is required as a cofactor.

It carries out the reaction (4R,5S)-dethiobiotin + (sulfur carrier)-SH + 2 reduced [2Fe-2S]-[ferredoxin] + 2 S-adenosyl-L-methionine = (sulfur carrier)-H + biotin + 2 5'-deoxyadenosine + 2 L-methionine + 2 oxidized [2Fe-2S]-[ferredoxin]. The protein operates within cofactor biosynthesis; biotin biosynthesis; biotin from 7,8-diaminononanoate: step 2/2. Functionally, catalyzes the conversion of dethiobiotin (DTB) to biotin by the insertion of a sulfur atom into dethiobiotin via a radical-based mechanism. The chain is Biotin synthase from Chlorobium limicola (strain DSM 245 / NBRC 103803 / 6330).